We begin with the raw amino-acid sequence, 427 residues long: Cysteate synthase (427 aa).

An N6-(pyridoxal phosphate)lysine modification is found at lysine 104. Residues asparagine 130 and threonine 382 each contribute to the pyridoxal 5'-phosphate site.

It belongs to the threonine synthase family. Cysteate synthase subfamily. In terms of assembly, homotrimer. Pyridoxal 5'-phosphate is required as a cofactor.

It carries out the reaction O-phospho-L-serine + sulfite + H(+) = L-cysteate + phosphate. It participates in cofactor biosynthesis; coenzyme M biosynthesis. Its function is as follows. Specifically catalyzes the beta-elimination of phosphate from L-phosphoserine and the beta-addition of sulfite to the dehydroalanine intermediate to produce L-cysteate. This Methanocella paludicola (strain DSM 17711 / JCM 13418 / NBRC 101707 / SANAE) protein is Cysteate synthase.